The chain runs to 348 residues: MGKTDLSYTLADIAFRIGAELRGDGSVEVKGLATLQKAQAGQISFLANKNYLKHLKDTCASAVIIPSSFADQCSTNVLVMENSYFGYALCSQLFSPQWWSMSGISPSAAISESAKLGAGVTIGANVVIEEDAEIGEGAVIGPGCYIGAGSIIGAKTQLRPNVTVYHGVNIGARALIHSGAVIGSDGFGFAPNKGDWAKIAQLGGVVIGDDVEIGANTTIDRGALDDTVIETGAKLDNQIQIAHNVKVGAYTVIAACVGVSGSSSIGKHCMIGGGVGIAGHLEITDQVQITGMTLVTHNIKEPGVYSSGTAVEPNASWRKNVARFRQLDQLARRVRVLEQGGRRKSDAD.

His243 serves as the catalytic Proton acceptor.

Belongs to the transferase hexapeptide repeat family. LpxD subfamily. Homotrimer.

The enzyme catalyses a UDP-3-O-[(3R)-3-hydroxyacyl]-alpha-D-glucosamine + a (3R)-hydroxyacyl-[ACP] = a UDP-2-N,3-O-bis[(3R)-3-hydroxyacyl]-alpha-D-glucosamine + holo-[ACP] + H(+). Its pathway is bacterial outer membrane biogenesis; LPS lipid A biosynthesis. Catalyzes the N-acylation of UDP-3-O-acylglucosamine using 3-hydroxyacyl-ACP as the acyl donor. Is involved in the biosynthesis of lipid A, a phosphorylated glycolipid that anchors the lipopolysaccharide to the outer membrane of the cell. In Hahella chejuensis (strain KCTC 2396), this protein is UDP-3-O-acylglucosamine N-acyltransferase.